The chain runs to 230 residues: uncharacterized protein (230 aa).

In terms of domain architecture, S4 RNA-binding spans 2–69; sequence HRLAKIISNA…KPRLWIYYKP (68 aa). Residue Asp-102 is the Nucleophile of the active site.

It belongs to the pseudouridine synthase RsuA family.

It carries out the reaction a uridine in RNA = a pseudouridine in RNA. This is an uncharacterized protein from Rickettsia conorii (strain ATCC VR-613 / Malish 7).